Consider the following 179-residue polypeptide: ATP synthase subunit delta (179 aa).

This sequence belongs to the ATPase delta chain family. In terms of assembly, F-type ATPases have 2 components, F(1) - the catalytic core - and F(0) - the membrane proton channel. F(1) has five subunits: alpha(3), beta(3), gamma(1), delta(1), epsilon(1). F(0) has three main subunits: a(1), b(2) and c(10-14). The alpha and beta chains form an alternating ring which encloses part of the gamma chain. F(1) is attached to F(0) by a central stalk formed by the gamma and epsilon chains, while a peripheral stalk is formed by the delta and b chains.

It is found in the cell inner membrane. Functionally, f(1)F(0) ATP synthase produces ATP from ADP in the presence of a proton or sodium gradient. F-type ATPases consist of two structural domains, F(1) containing the extramembraneous catalytic core and F(0) containing the membrane proton channel, linked together by a central stalk and a peripheral stalk. During catalysis, ATP synthesis in the catalytic domain of F(1) is coupled via a rotary mechanism of the central stalk subunits to proton translocation. Its function is as follows. This protein is part of the stalk that links CF(0) to CF(1). It either transmits conformational changes from CF(0) to CF(1) or is implicated in proton conduction. The chain is ATP synthase subunit delta from Anaeromyxobacter dehalogenans (strain 2CP-C).